A 481-amino-acid chain; its full sequence is Inosine-5'-monophosphate dehydrogenase (481 aa).

CBS domains lie at 92-148 and 152-209; these read VIND…SKKV and MTKM…PEAN. Residues Asp244 and 293–295 contribute to the NAD(+) site; that span reads GIG. Residues Gly295 and Gly297 each contribute to the K(+) site. Ser298 is a binding site for IMP. Cys300 is a binding site for K(+). Catalysis depends on Cys300, which acts as the Thioimidate intermediate. IMP-binding positions include 333-335, 356-357, and 380-384; these read DGG, GS, and YRGMG. Arg396 acts as the Proton acceptor in catalysis. Glu410 is an IMP binding site. K(+) is bound by residues Glu464, Ser465, and His466.

Belongs to the IMPDH/GMPR family. In terms of assembly, homotetramer. K(+) is required as a cofactor.

The catalysed reaction is IMP + NAD(+) + H2O = XMP + NADH + H(+). It participates in purine metabolism; XMP biosynthesis via de novo pathway; XMP from IMP: step 1/1. Its activity is regulated as follows. Mycophenolic acid (MPA) is a non-competitive inhibitor that prevents formation of the closed enzyme conformation by binding to the same site as the amobile flap. In contrast, mizoribine monophosphate (MZP) is a competitive inhibitor that induces the closed conformation. MPA is a potent inhibitor of mammalian IMPDHs but a poor inhibitor of the bacterial enzymes. MZP is a more potent inhibitor of bacterial IMPDH. Its function is as follows. Catalyzes the conversion of inosine 5'-phosphate (IMP) to xanthosine 5'-phosphate (XMP), the first committed and rate-limiting step in the de novo synthesis of guanine nucleotides, and therefore plays an important role in the regulation of cell growth. This is Inosine-5'-monophosphate dehydrogenase from Helicobacter pylori (strain ATCC 700392 / 26695) (Campylobacter pylori).